We begin with the raw amino-acid sequence, 595 residues long: DNA primase (595 aa).

Residues 38-62 form a CHC2-type zinc finger; that stretch reads CPFHDEKTPSFIVYPTRGHYHCYGC. Positions 251–331 constitute a Toprim domain; it reads RRVILVEGQA…GITAIVCRLP (81 aa). Glutamate 257, aspartate 302, and aspartate 304 together coordinate Mg(2+). Residues 430–441 are compositionally biased toward basic and acidic residues; sequence KGKKVSAKEPSS. The tract at residues 430–451 is disordered; it reads KGKKVSAKEPSSESKQTSTEGK.

This sequence belongs to the DnaG primase family. In terms of assembly, monomer. Interacts with DnaB. Zn(2+) is required as a cofactor. Requires Mg(2+) as cofactor.

It carries out the reaction ssDNA + n NTP = ssDNA/pppN(pN)n-1 hybrid + (n-1) diphosphate.. RNA polymerase that catalyzes the synthesis of short RNA molecules used as primers for DNA polymerase during DNA replication. The protein is DNA primase of Chlamydia trachomatis serovar D (strain ATCC VR-885 / DSM 19411 / UW-3/Cx).